Consider the following 485-residue polypeptide: Mitochondria-eating protein (485 aa).

Positions 112 to 210 form a coiled coil; it reads TSHERELNEV…SILSSESSIL (99 aa). Composition is skewed to low complexity over residues 214 to 241 and 471 to 485; these read LSRS…SPTS and RSRS…TPRF. Disordered stretches follow at residues 214 to 244 and 451 to 485; these read LSRS…SAKL and RSRS…TPRF.

This sequence belongs to the MIEAP family.

It is found in the cytoplasm. The protein localises to the mitochondrion outer membrane. Its subcellular location is the mitochondrion matrix. In terms of biological role, key regulator of mitochondrial quality that mediates the repairing or degradation of unhealthy mitochondria in response to mitochondrial damage. Mediator of mitochondrial protein catabolic process (also named MALM) by mediating the degradation of damaged proteins inside mitochondria by promoting the accumulation in the mitochondrial matrix of hydrolases that are characteristic of the lysosomal lumen. Also involved in mitochondrion degradation of damaged mitochondria by promoting the formation of vacuole-like structures (named MIV), which engulf and degrade unhealthy mitochondria by accumulating lysosomes. Binds cardiolipin. May form molecular condensates (non-membrane-bounded organelles) within mitochondria that compartmentalize and promote cardiolipin metabolism. This is Mitochondria-eating protein (spata18) from Xenopus laevis (African clawed frog).